The chain runs to 94 residues: Large ribosomal subunit protein bL25 (94 aa).

The protein belongs to the bacterial ribosomal protein bL25 family. As to quaternary structure, part of the 50S ribosomal subunit; part of the 5S rRNA/L5/L18/L25 subcomplex. Contacts the 5S rRNA. Binds to the 5S rRNA independently of L5 and L18.

Its function is as follows. This is one of the proteins that binds to the 5S RNA in the ribosome where it forms part of the central protuberance. In Enterobacter sp. (strain 638), this protein is Large ribosomal subunit protein bL25.